The chain runs to 251 residues: Precorrin-4 C(11)-methyltransferase (251 aa).

Belongs to the precorrin methyltransferase family.

It catalyses the reaction precorrin-4 + S-adenosyl-L-methionine = precorrin-5 + S-adenosyl-L-homocysteine. It participates in cofactor biosynthesis; adenosylcobalamin biosynthesis; cob(II)yrinate a,c-diamide from precorrin-2 (aerobic route): step 4/10. Functionally, catalyzes the methylation of C-11 in precorrin-4 to form precorrin-5. The polypeptide is Precorrin-4 C(11)-methyltransferase (cobM) (Mycobacterium tuberculosis (strain CDC 1551 / Oshkosh)).